The primary structure comprises 486 residues: Glutamyl-tRNA(Gln) amidotransferase subunit A (486 aa).

Catalysis depends on charge relay system residues lysine 77 and serine 152. Serine 176 acts as the Acyl-ester intermediate in catalysis.

It belongs to the amidase family. GatA subfamily. In terms of assembly, heterotrimer of A, B and C subunits.

The catalysed reaction is L-glutamyl-tRNA(Gln) + L-glutamine + ATP + H2O = L-glutaminyl-tRNA(Gln) + L-glutamate + ADP + phosphate + H(+). Its function is as follows. Allows the formation of correctly charged Gln-tRNA(Gln) through the transamidation of misacylated Glu-tRNA(Gln) in organisms which lack glutaminyl-tRNA synthetase. The reaction takes place in the presence of glutamine and ATP through an activated gamma-phospho-Glu-tRNA(Gln). This Pediococcus pentosaceus (strain ATCC 25745 / CCUG 21536 / LMG 10740 / 183-1w) protein is Glutamyl-tRNA(Gln) amidotransferase subunit A.